The chain runs to 311 residues: GPN-loop GTPase 2 (311 aa).

GTP is bound at residue 20–25 (GSGKTT). Residues 77 to 79 (GPN) carry the Gly-Pro-Asn (GPN)-loop; involved in dimer interface motif. GTP is bound at residue 179–182 (SKMD).

It belongs to the GPN-loop GTPase family. Heterodimers with gpn1 or gpn3. Binds to RNA polymerase II (RNAPII).

Small GTPase required for proper localization of RNA polymerase II and III (RNAPII and RNAPIII). May act at an RNAP assembly step prior to nuclear import. This is GPN-loop GTPase 2 from Danio rerio (Zebrafish).